The chain runs to 304 residues: Acetylglutamate kinase (304 aa).

Residues 75–76, arginine 97, and asparagine 202 contribute to the substrate site; that span reads GG.

It belongs to the acetylglutamate kinase family. ArgB subfamily.

The protein resides in the cytoplasm. It carries out the reaction N-acetyl-L-glutamate + ATP = N-acetyl-L-glutamyl 5-phosphate + ADP. It functions in the pathway amino-acid biosynthesis; L-arginine biosynthesis; N(2)-acetyl-L-ornithine from L-glutamate: step 2/4. Functionally, catalyzes the ATP-dependent phosphorylation of N-acetyl-L-glutamate. The polypeptide is Acetylglutamate kinase (Parvibaculum lavamentivorans (strain DS-1 / DSM 13023 / NCIMB 13966)).